The primary structure comprises 337 residues: Glucokinase (337 aa).

11-16 (ADIGGT) contacts ATP.

Belongs to the bacterial glucokinase family.

The protein resides in the cytoplasm. It catalyses the reaction D-glucose + ATP = D-glucose 6-phosphate + ADP + H(+). The polypeptide is Glucokinase (Xylella fastidiosa (strain M23)).